Consider the following 2182-residue polypeptide: MATFFQSFRSSSMPKRLLRYALSRLELLDADALEMDNLDLAIGRNTVFEFRDVGIKLKKLNKLLQLPDTFKLKKAKVLLLRVTIPMDFYTSPIIVEVDGVDIALQVIGNESKPSRSPGTRTPDESVAVPNTVDLAQSFLETQPKSERRKLEDALAAESQDLGASVSMSDDGSEDDLAYGTGQALSLPAFLADFLQGIVDRMQVRIKGVNFQLDVEVLVEPSSTTNEMVSFQVALEGIDVEGVTTRSYDDAGFPTIVHKEGKRHVSLSNVRAYLISEANVFSALAKSPSIASPSLASSPAMTRNPPSRQATELSLASLRDEPVSSSQASIRSNEPESASHHSLPENDHILSSQHSIDQRLESSLRQSLQRKDPLADSHESLQDDYFMDQEPVEQDYPLGDSEDALGIPYEFSNPQDDDAEDSPATPRASMYHDFNNAANDETLFHSILLPGEHGSQSTVLENERSMWSTPEREARSAPNLETPVAQFNMEASSSSIQNEQLRRTFSSESFGVASTEELAQSHMYTHEDAENEPAPEVEQTTEPEKPDSPVLDTSVHELARPQTPEPELSIAEAPVPETSSPKALSLRAPSPVTEDAPSPVREHRKPEGFIPGAWDDDYDDPEEEPVASTTLRRSAYRSKILSDPADASDSESSEPAFSRACLTDIDPENPRASTKQQEDVATPKGPTRLVKEILNLKTISIYIPSQHQHIQVQPASSESVAELSQSLGQSAYPQAPGAFSVHGATHAQQRSSQGTSSVENSLEVDLSPINLRFDASLGFLLAMVVGKLLEAVKDKKPSPAEGSKQDTASKDAPSKETPNVKVTFEEIKLDFVNRLGGISDTPERYLDPSAFIFDQEVLLNATLQNLAISITQTEISTTPVTKGRLTTQPAVLTRIDLQKFRFGYANGDIISFDSGKPMSTSVRDTFLSDGTDIGIKILQSGGNTKTEVQTLPLVFQLDLRRLDETFSWFGGLSSFLNMSASIASSPAPTPKPAAVVQKPRGVRFDTPVDPDDKSAASENKINLRIGGSWVELIGKDCSMIAETSAIKLISRDEVIGMACSMMRVSGPHLKNSAAEPPINTEIGGVRVEFLTTPKDTDLEKLLELIMPSKHQFDGENDEIMVDTLLRQRRKGSVLRVTVDTVSVRVQNMPLLSVLPNLGEEVAKLSTVAKYLPEDDRPGLLTLGKIRKVGLSLDFGGKLGHLGTDIQDLHVGHISIPSLVAIALHDISVQRNRSEELVSTSPYGARDISLRSPVLMARMIGDEIEPVIKLKMQDLCIEYRVPTIMDLLELGEDATPQDFEASLAASVANLGDQAHHVLTGAPGSPGGKAKSGKPMTLDIGFRDCLLGLNPLGQPSKMVIALTDAHLVALLPQDVETNAVFTINKSSILLINDVAEVKMNELPATQRSRASSSTSRQVSDMCARGYVDICYISSAKVTVDVKELEDGEKQLVVELKDDLLVLETCADSMQTLVSLANALKPPTPPSKENKYLTDVVPMQDLLASISAEAFGRPEGEYDFDQDFAGAQEMAGSGSEADYNTDSPLQVQSRYYDEPVAEELFDATSSSIISRGSQRSGPMMQDTNEGVLLTGFEPTSQQSIDSDDLVIHDDYYDQGASKDSKAKVWNSMKNSYDLAPSDLVKRSILRVKVRDVHVIWNLFDGYDWVHTRDVITKAVQDVEAKAYERQARAGQVHVYEEELEDEEAIGDFLFNSIYIGIPANRDPQELSRAINEGFNDGATETESVATTAFTSATNRTARARPRSKRLKLKRSKHHKITFELQGVDADLFVFPPNSGETLNSIDVRIKTLDVFDHVPTSTWKKFATYDQDMGEREMGTSMVHLEMLNVKPQPSLEASEIVLRATILPLRLHVDQDALDFITRFFEFKDDQVPVHTSKSDVPFLQRAEINNISVKLDFKPKRVDYAGLRSGHTTEFMNFIVLEEARMVLRHVIIYGISGFEKLGKTLNDIWTPDVKANQLPGILAGLAPVRSLVNVGSGFRDLVEVPIREYKKDGRVIRSISKGATAFARTTGTELVKLGAKLAVGTQYALQGAEGMLSGPQQVYEGWDDDDVDPDEQRQISLYADQPTGVISGIRGGYRSLARDVNLVRDAIIAVPGEVMESSTASGAARAVLKRAPTIIFRPAVGVTRAIGQTLMGATNSIDPNNRRRIEEVCYLFAILRRILLTAA.

Disordered stretches follow at residues 291–375 (SPSL…PLAD), 392–426 (EQDY…ATPR), 523–630 (YTHE…STTL), 663–682 (DIDP…VATP), 736–758 (GAFS…SSVE), and 793–816 (DKKP…SKET). Composition is skewed to polar residues over residues 303–313 (NPPSRQATELS) and 322–331 (VSSSQASIRS). The span at 332–347 (NEPESASHHSLPENDH) shows a compositional bias: basic and acidic residues. 2 stretches are compositionally biased toward acidic residues: residues 528–540 (AENE…EQTT) and 613–624 (WDDDYDDPEEEP). The span at 745 to 758 (HAQQRSSQGTSSVE) shows a compositional bias: polar residues. The segment covering 793 to 813 (DKKPSPAEGSKQDTASKDAPS) has biased composition (basic and acidic residues).

The protein belongs to the ATG2 family. As to quaternary structure, interacts with ATG18.

It localises to the preautophagosomal structure membrane. The protein localises to the endoplasmic reticulum membrane. It catalyses the reaction a 1,2-diacyl-sn-glycero-3-phosphocholine(in) = a 1,2-diacyl-sn-glycero-3-phosphocholine(out). The enzyme catalyses a 1,2-diacyl-sn-glycero-3-phospho-L-serine(in) = a 1,2-diacyl-sn-glycero-3-phospho-L-serine(out). It carries out the reaction a 1,2-diacyl-sn-glycero-3-phosphoethanolamine(in) = a 1,2-diacyl-sn-glycero-3-phosphoethanolamine(out). Lipid transfer protein required for autophagosome completion and peroxisome degradation and peroxisome degradation. Tethers the edge of the isolation membrane (IM) to the endoplasmic reticulum (ER) and mediates direct lipid transfer from ER to IM for IM expansion. ATG2 binds to the ER exit site (ERES), which is the membrane source for autophagosome formation, using basic residues in its N-terminal region (NR) and to the expanding edge of the IM through its C-terminal region. The latter binding is assisted by an ATG18-PtdIns3P interaction. ATG2 then extracts phospholipids from the membrane source using its NR and transfers them to ATG9 to the IM through its predicted beta-sheet-rich structure for membrane expansion. Autophagy is required for proper vegetative growth, asexual/sexual reproduction, and full virulence. Autophagy is particularly involved in the biosynthesis of deoxynivalenol (DON), an important virulence determinant. This chain is Autophagy-related protein 2, found in Gibberella zeae (strain ATCC MYA-4620 / CBS 123657 / FGSC 9075 / NRRL 31084 / PH-1) (Wheat head blight fungus).